Consider the following 160-residue polypeptide: Protein cornichon homolog 2 (160 aa).

Residues 1–10 (MAFTFAAFCY) are Cytoplasmic-facing. Residues 11-31 (MLTLVLCASLIFFVIWHIIAF) traverse the membrane as a helical segment. At 32-72 (DELRTDFKNPIDQGNPARARERLKNIERICCLLRKLVVPEY) the chain is on the lumenal side. The chain crosses the membrane as a helical span at residues 73 to 93 (SIHGLFCLMFLCAAEWVTLGL). At 94-138 (NIPLLFYHLWRYFHRPADGSEVMYDAVSIMNADILNYCQKESWCK) the chain is on the cytoplasmic side. A helical transmembrane segment spans residues 139–159 (LAFYLLSFFYYLYSMVYTLVS). Residue phenylalanine 160 is a topological domain, lumenal.

Belongs to the cornichon family. Acts as an auxiliary subunit for AMPA-selective glutamate receptors (AMPARs). Found in a complex with GRIA1, GRIA2, GRIA3, GRIA4, CNIH3, CACNG2, CACNG3, CACNG4, CACNG5, CACNG7 and CACNG8. Interacts with CACGN8. Interacts with GRIA1. Found in a complex with GRIA1, GRIA2, GRIA3, GRIA4, DLG4 and CACNG8. As to expression, expression is up-regulated in dorsolateral prefrontal cortex of patients with schizophrenia (postmortem brain study).

Its subcellular location is the endoplasmic reticulum membrane. It localises to the postsynaptic cell membrane. The protein resides in the cell projection. It is found in the dendrite. The protein localises to the dendritic spine. Its subcellular location is the postsynaptic density. Its function is as follows. Regulates the trafficking and gating properties of AMPA-selective glutamate receptors (AMPARs). Promotes their targeting to the cell membrane and synapses and modulates their gating properties by regulating their rates of activation, deactivation and desensitization. Blocks CACNG8-mediated resensitization of AMPA receptors. The polypeptide is Protein cornichon homolog 2 (Homo sapiens (Human)).